Consider the following 215-residue polypeptide: Probable maleylacetoacetate isomerase (215 aa).

One can recognise a GST N-terminal domain in the interval 2 to 85; sequence MSLILYGYWR…YLDETYPAPR (84 aa). The region spanning 90–215 is the GST C-terminal domain; that stretch reads RGAERYQVKA…AAPENQPDAC (126 aa).

This sequence belongs to the GST superfamily. Zeta family.

The catalysed reaction is 4-maleylacetoacetate = 4-fumarylacetoacetate. It functions in the pathway amino-acid degradation; L-phenylalanine degradation; acetoacetate and fumarate from L-phenylalanine: step 5/6. The sequence is that of Probable maleylacetoacetate isomerase (maiA) from Vibrio cholerae serotype O1 (strain ATCC 39315 / El Tor Inaba N16961).